A 223-amino-acid chain; its full sequence is Alpha-S2-casein (223 aa).

The N-terminal stretch at Met-1–Ala-15 is a signal peptide. Ser-23, Ser-24, Ser-25, Ser-72, Ser-73, Ser-74, Ser-77, Ser-145, Ser-147, Ser-151, and Ser-159 each carry phosphoserine. Residues Ser-77–Arg-141 constitute a repeat. The stretch at residues Ser-159–Leu-223 is a repeat.

It belongs to the alpha-casein family. In terms of tissue distribution, mammary gland specific. Secreted in milk.

The protein localises to the secreted. In terms of biological role, important role in the capacity of milk to transport calcium phosphate. The chain is Alpha-S2-casein (CSN1S2) from Ovis aries (Sheep).